The following is a 426-amino-acid chain: Serine--tRNA ligase (426 aa).

Thr230–Glu232 contributes to the L-serine binding site. Arg261 to Glu263 provides a ligand contact to ATP. Glu284 contacts L-serine. Glu348–Ser351 serves as a coordination point for ATP. Position 384 (Ser384) interacts with L-serine.

It belongs to the class-II aminoacyl-tRNA synthetase family. Type-1 seryl-tRNA synthetase subfamily. Homodimer. The tRNA molecule binds across the dimer.

Its subcellular location is the cytoplasm. It carries out the reaction tRNA(Ser) + L-serine + ATP = L-seryl-tRNA(Ser) + AMP + diphosphate + H(+). The catalysed reaction is tRNA(Sec) + L-serine + ATP = L-seryl-tRNA(Sec) + AMP + diphosphate + H(+). It functions in the pathway aminoacyl-tRNA biosynthesis; selenocysteinyl-tRNA(Sec) biosynthesis; L-seryl-tRNA(Sec) from L-serine and tRNA(Sec): step 1/1. Catalyzes the attachment of serine to tRNA(Ser). Is also able to aminoacylate tRNA(Sec) with serine, to form the misacylated tRNA L-seryl-tRNA(Sec), which will be further converted into selenocysteinyl-tRNA(Sec). In Phenylobacterium zucineum (strain HLK1), this protein is Serine--tRNA ligase.